Reading from the N-terminus, the 90-residue chain is Small ribosomal subunit protein bS18 (90 aa).

The tract at residues 1-23 (MKPMRQKNTRAQGNKSISNALAS) is disordered. The span at 9-21 (TRAQGNKSISNAL) shows a compositional bias: polar residues.

Belongs to the bacterial ribosomal protein bS18 family. As to quaternary structure, part of the 30S ribosomal subunit. Forms a tight heterodimer with protein bS6.

Binds as a heterodimer with protein bS6 to the central domain of the 16S rRNA, where it helps stabilize the platform of the 30S subunit. This Chlorobium luteolum (strain DSM 273 / BCRC 81028 / 2530) (Pelodictyon luteolum) protein is Small ribosomal subunit protein bS18.